A 426-amino-acid chain; its full sequence is D-tagatose-1,6-bisphosphate aldolase subunit KbaZ (426 aa).

Belongs to the GatZ/KbaZ family. KbaZ subfamily. As to quaternary structure, forms a complex with KbaY.

It functions in the pathway carbohydrate metabolism; D-tagatose 6-phosphate degradation; D-glyceraldehyde 3-phosphate and glycerone phosphate from D-tagatose 6-phosphate: step 2/2. Its function is as follows. Component of the tagatose-1,6-bisphosphate aldolase KbaYZ that is required for full activity and stability of the Y subunit. Could have a chaperone-like function for the proper and stable folding of KbaY. When expressed alone, KbaZ does not show any aldolase activity. The sequence is that of D-tagatose-1,6-bisphosphate aldolase subunit KbaZ from Escherichia coli (strain 55989 / EAEC).